The primary structure comprises 439 residues: MDLGTTKYIIYTELIADGYVEKHDVIGAIFGQTEGLLSNELDLRDLQKSGRIGRIDVDLENINGKSFAKITLPSSLDKVETSILAATLETIDRVGPCFATVKITEVEDIRVSKRQYITNRARSILRKLMDEMIDTYEITEEIKESLRTEEIMEFGPENLPCGPNVVHSDSIIVVEGRADVLTLLRCGIKNTVAVEGTSVPKSIMELTKKKTTTAFTDGDRGGELILKELLQTCDIDYVARAPYGKEVEGTSKKEIMKCLRAKVPVEQIVGNNCNNSCNVSEVINSNSPEEIVESVTPKYFEKVETPVTEPVFDDNVVEEETVIVEPVKKTETEIIDVDAANESQVDKKFSGVKEIVDSIKNTGNVKFVVDGTEKTNTFKEFLTNIHEIKKMDFFAADMPISQKIVDLLYDKTPIIVGKEINVTKKPVNLRLFSFDEIVA.

The Toprim domain occupies 169–243 (DSIIVVEGRA…DIDYVARAPY (75 aa)). Residues E175, D217, and D219 each coordinate Mg(2+).

Belongs to the archaeal DnaG primase family. As to quaternary structure, forms a ternary complex with MCM helicase and DNA. Requires Mg(2+) as cofactor.

It carries out the reaction ssDNA + n NTP = ssDNA/pppN(pN)n-1 hybrid + (n-1) diphosphate.. Functionally, RNA polymerase that catalyzes the synthesis of short RNA molecules used as primers for DNA polymerase during DNA replication. This is DNA primase DnaG from Methanococcus maripaludis (strain C7 / ATCC BAA-1331).